The chain runs to 260 residues: Cytochrome c oxidase subunit 3 (260 aa).

6 consecutive transmembrane segments (helical) span residues 41 to 61, 81 to 101, 133 to 153, 161 to 181, 196 to 216, and 238 to 258; these read LTLVGFLLLITNMVNWWRDII, GMILFITSEVCFFFAFFWAFF, TGVLLSSGVTLSWSHHSILAG, ALFLTVALGSYFTALQAWEYI, FFVATGFHGLQVIIGTTFLMV, and AWYWHFVDVVWFVLYWLIYWW.

This sequence belongs to the cytochrome c oxidase subunit 3 family. In terms of assembly, component of the cytochrome c oxidase (complex IV, CIV), a multisubunit enzyme composed of a catalytic core of 3 subunits and several supernumerary subunits. The complex exists as a monomer or a dimer and forms supercomplexes (SCs) in the inner mitochondrial membrane with ubiquinol-cytochrome c oxidoreductase (cytochrome b-c1 complex, complex III, CIII).

The protein resides in the mitochondrion inner membrane. It carries out the reaction 4 Fe(II)-[cytochrome c] + O2 + 8 H(+)(in) = 4 Fe(III)-[cytochrome c] + 2 H2O + 4 H(+)(out). In terms of biological role, component of the cytochrome c oxidase, the last enzyme in the mitochondrial electron transport chain which drives oxidative phosphorylation. The respiratory chain contains 3 multisubunit complexes succinate dehydrogenase (complex II, CII), ubiquinol-cytochrome c oxidoreductase (cytochrome b-c1 complex, complex III, CIII) and cytochrome c oxidase (complex IV, CIV), that cooperate to transfer electrons derived from NADH and succinate to molecular oxygen, creating an electrochemical gradient over the inner membrane that drives transmembrane transport and the ATP synthase. Cytochrome c oxidase is the component of the respiratory chain that catalyzes the reduction of oxygen to water. Electrons originating from reduced cytochrome c in the intermembrane space (IMS) are transferred via the dinuclear copper A center (CU(A)) of subunit 2 and heme A of subunit 1 to the active site in subunit 1, a binuclear center (BNC) formed by heme A3 and copper B (CU(B)). The BNC reduces molecular oxygen to 2 water molecules using 4 electrons from cytochrome c in the IMS and 4 protons from the mitochondrial matrix. The polypeptide is Cytochrome c oxidase subunit 3 (COIII) (Strongylocentrotus purpuratus (Purple sea urchin)).